A 757-amino-acid polypeptide reads, in one-letter code: Xaa-Pro dipeptidyl-peptidase (757 aa).

Active-site charge relay system residues include Ser-348, Asp-468, and His-498.

The protein belongs to the peptidase S15 family. In terms of assembly, homodimer.

It localises to the cytoplasm. It carries out the reaction Hydrolyzes Xaa-Pro-|- bonds to release unblocked, N-terminal dipeptides from substrates including Ala-Pro-|-p-nitroanilide and (sequentially) Tyr-Pro-|-Phe-Pro-|-Gly-Pro-|-Ile.. Functionally, removes N-terminal dipeptides sequentially from polypeptides having unsubstituted N-termini provided that the penultimate residue is proline. This is Xaa-Pro dipeptidyl-peptidase from Streptococcus pneumoniae (strain Hungary19A-6).